A 226-amino-acid polypeptide reads, in one-letter code: Urease accessory protein UreF (226 aa).

This sequence belongs to the UreF family. As to quaternary structure, ureD, UreF and UreG form a complex that acts as a GTP-hydrolysis-dependent molecular chaperone, activating the urease apoprotein by helping to assemble the nickel containing metallocenter of UreC. The UreE protein probably delivers the nickel.

It is found in the cytoplasm. Required for maturation of urease via the functional incorporation of the urease nickel metallocenter. This is Urease accessory protein UreF from Paraburkholderia xenovorans (strain LB400).